The following is a 293-amino-acid chain: Proline iminopeptidase (293 aa).

Positions 28–277 (PLVLLHGGPG…NCGHMSFVEK (250 aa)) constitute an AB hydrolase-1 domain. Ser-105 acts as the Nucleophile in catalysis. Asp-244 is an active-site residue. His-271 (proton donor) is an active-site residue.

This sequence belongs to the peptidase S33 family.

It localises to the cell envelope. It carries out the reaction Release of N-terminal proline from a peptide.. Releases the N-terminal proline from various substrates. The sequence is that of Proline iminopeptidase from Lactobacillus crispatus (strain ST1).